We begin with the raw amino-acid sequence, 567 residues long: Proline--tRNA ligase (567 aa).

This sequence belongs to the class-II aminoacyl-tRNA synthetase family. ProS type 1 subfamily. As to quaternary structure, homodimer.

It is found in the cytoplasm. It catalyses the reaction tRNA(Pro) + L-proline + ATP = L-prolyl-tRNA(Pro) + AMP + diphosphate. Catalyzes the attachment of proline to tRNA(Pro) in a two-step reaction: proline is first activated by ATP to form Pro-AMP and then transferred to the acceptor end of tRNA(Pro). As ProRS can inadvertently accommodate and process non-cognate amino acids such as alanine and cysteine, to avoid such errors it has two additional distinct editing activities against alanine. One activity is designated as 'pretransfer' editing and involves the tRNA(Pro)-independent hydrolysis of activated Ala-AMP. The other activity is designated 'posttransfer' editing and involves deacylation of mischarged Ala-tRNA(Pro). The misacylated Cys-tRNA(Pro) is not edited by ProRS. In Staphylococcus epidermidis (strain ATCC 35984 / DSM 28319 / BCRC 17069 / CCUG 31568 / BM 3577 / RP62A), this protein is Proline--tRNA ligase.